Here is a 1385-residue protein sequence, read N- to C-terminus: DNA-directed RNA polymerase subunit beta (1385 aa).

Belongs to the RNA polymerase beta chain family. The RNAP catalytic core consists of 2 alpha, 1 beta, 1 beta' and 1 omega subunit. When a sigma factor is associated with the core the holoenzyme is formed, which can initiate transcription.

It catalyses the reaction RNA(n) + a ribonucleoside 5'-triphosphate = RNA(n+1) + diphosphate. Functionally, DNA-dependent RNA polymerase catalyzes the transcription of DNA into RNA using the four ribonucleoside triphosphates as substrates. The sequence is that of DNA-directed RNA polymerase subunit beta from Jannaschia sp. (strain CCS1).